A 283-amino-acid polypeptide reads, in one-letter code: Zinc import ATP-binding protein ZnuC (283 aa).

Residues 13-228 form the ABC transporter domain; the sequence is VEMRNAGVHR…PEYVRLFGAR (216 aa). Residue 45–52 participates in ATP binding; it reads GPNGSGKS. Residues 264–283 are disordered; it reads HHHDHARDGGQGGGGHGHAG. Over residues 272–283 the composition is skewed to gly residues; sequence GGQGGGGHGHAG.

It belongs to the ABC transporter superfamily. Zinc importer (TC 3.A.1.15.5) family. In terms of assembly, the complex is composed of two ATP-binding proteins (ZnuC), two transmembrane proteins (ZnuB) and a solute-binding protein (ZnuA).

It is found in the cell inner membrane. The catalysed reaction is Zn(2+)(out) + ATP(in) + H2O(in) = Zn(2+)(in) + ADP(in) + phosphate(in) + H(+)(in). Functionally, part of the ABC transporter complex ZnuABC involved in zinc import. Responsible for energy coupling to the transport system. The chain is Zinc import ATP-binding protein ZnuC from Chelativorans sp. (strain BNC1).